The chain runs to 258 residues: Polysialic acid transport protein KpsM (258 aa).

Over 1–30 (MARSGFEVQKVTVEALFLREIRTRFGKFRL) the chain is Cytoplasmic. Positions 30–251 (LGYLWAILEP…FIGLALYRTR (222 aa)) constitute an ABC transmembrane type-2 domain. The chain crosses the membrane as a helical span at residues 31-54 (GYLWAILEPSAHLLILLGILGYVM). The Periplasmic portion of the chain corresponds to 55 to 61 (HRTMPDI). Residues 62–81 (SFPVFLLNGLIPFFIFSSIS) traverse the membrane as a helical segment. At 82–108 (KRSIGAIEANQGLFNYRPVKPIDTIIA) the chain is on the cytoplasmic side. The helical transmembrane segment at 109–132 (RALLETLIYVAVYILLMLIVWMTG) threads the bilayer. Topologically, residues 133 to 143 (EYFEITNFLQL) are periplasmic. The helical transmembrane segment at 144 to 165 (VLTWSLLIILSCGVGLIFMVVG) threads the bilayer. The Cytoplasmic segment spans residues 166 to 174 (KTFPEMQKV). Residues 175–195 (LPILLKPLYFISCIMFPLHSI) traverse the membrane as a helical segment. The Periplasmic segment spans residues 196-226 (PKQYWSYLLWNPLVHVVELSREAVMPGYISE). The chain crosses the membrane as a helical span at residues 227–247 (GVSLNYLAMFTLVTLFIGLAL). Residues 248-258 (YRTREEAMLTS) are Cytoplasmic-facing.

Belongs to the ABC-2 integral membrane protein family.

It is found in the cell inner membrane. Functionally, kpsM and KpsT constitute a system for the transport of polysialic acid across the cytoplasmic membrane. The protein is Polysialic acid transport protein KpsM (kpsM) of Escherichia coli.